The primary structure comprises 66 residues: Large ribosomal subunit protein uL29 (66 aa).

It belongs to the universal ribosomal protein uL29 family.

The sequence is that of Large ribosomal subunit protein uL29 from Borrelia duttonii (strain Ly).